A 159-amino-acid polypeptide reads, in one-letter code: Large ribosomal subunit protein uL10 (159 aa).

It belongs to the universal ribosomal protein uL10 family. Part of the ribosomal stalk of the 50S ribosomal subunit. The N-terminus interacts with L11 and the large rRNA to form the base of the stalk. The C-terminus forms an elongated spine to which L12 dimers bind in a sequential fashion forming a multimeric L10(L12)X complex.

Functionally, forms part of the ribosomal stalk, playing a central role in the interaction of the ribosome with GTP-bound translation factors. This chain is Large ribosomal subunit protein uL10, found in Sulfurimonas denitrificans (strain ATCC 33889 / DSM 1251) (Thiomicrospira denitrificans (strain ATCC 33889 / DSM 1251)).